Reading from the N-terminus, the 58-residue chain is Potassium channel toxin alpha-KTx 9.9 (58 aa).

Residues 1 to 21 form the signal peptide; that stretch reads KKTSRLFTLVLIVLAMNVMMA. Residues 22 to 30 constitute a propeptide that is removed on maturation; it reads IISDPVVEA. Disulfide bonds link Cys33–Cys49, Cys36–Cys54, and Cys40–Cys56.

The protein belongs to the short scorpion toxin superfamily. Potassium channel inhibitor family. Alpha-KTx 09 subfamily. In terms of tissue distribution, expressed by the venom gland.

It is found in the secreted. Its function is as follows. Potassium channel inhibitor. This chain is Potassium channel toxin alpha-KTx 9.9, found in Buthus israelis (Israeli scorpion).